The chain runs to 226 residues: Deoxyribose-phosphate aldolase (226 aa).

Asp-84 acts as the Proton donor/acceptor in catalysis. Lys-146 functions as the Schiff-base intermediate with acetaldehyde in the catalytic mechanism. Residue Lys-188 is the Proton donor/acceptor of the active site.

Belongs to the DeoC/FbaB aldolase family. DeoC type 1 subfamily.

Its subcellular location is the cytoplasm. The enzyme catalyses 2-deoxy-D-ribose 5-phosphate = D-glyceraldehyde 3-phosphate + acetaldehyde. Its pathway is carbohydrate degradation; 2-deoxy-D-ribose 1-phosphate degradation; D-glyceraldehyde 3-phosphate and acetaldehyde from 2-deoxy-alpha-D-ribose 1-phosphate: step 2/2. Its function is as follows. Catalyzes a reversible aldol reaction between acetaldehyde and D-glyceraldehyde 3-phosphate to generate 2-deoxy-D-ribose 5-phosphate. The chain is Deoxyribose-phosphate aldolase from Pyrobaculum arsenaticum (strain DSM 13514 / JCM 11321 / PZ6).